The primary structure comprises 494 residues: Alpha-amylase 1 (494 aa).

The first 18 residues, 1-18 (MFLAKSIVCLALLAVANA), serve as a signal peptide directing secretion. Cysteines 46 and 102 form a disulfide. Ca(2+)-binding residues include asparagine 116, arginine 165, and aspartate 174. The cysteines at positions 153 and 167 are disulfide-linked. Arginine 202 is a binding site for chloride. Aspartate 204 acts as the Nucleophile in catalysis. Position 208 (histidine 208) interacts with Ca(2+). Glutamate 241 serves as the catalytic Proton donor. Positions 304 and 343 each coordinate chloride. The segment at 350 to 370 (FTDTDQGPPTTDGQNIASPSF) is disordered. A compositionally biased stretch (low complexity) spans 351-363 (TDTDQGPPTTDGQ). Intrachain disulfides connect cysteine 376-cysteine 382 and cysteine 448-cysteine 460.

It belongs to the glycosyl hydrolase 13 family. As to quaternary structure, monomer. The cofactor is Ca(2+). Chloride is required as a cofactor.

It carries out the reaction Endohydrolysis of (1-&gt;4)-alpha-D-glucosidic linkages in polysaccharides containing three or more (1-&gt;4)-alpha-linked D-glucose units.. The sequence is that of Alpha-amylase 1 (Amy35) from Drosophila ananassae (Fruit fly).